Here is a 517-residue protein sequence, read N- to C-terminus: Mitochondrial division protein fszA (517 aa).

GTP contacts are provided by residues 60–64 (GGGCN), 147–149 (GTG), glutamate 178, arginine 182, and aspartate 225. Residues 496–517 (FTNGNNNKPYNNNKNTPGSNYE) form a disordered region. Residues 497 to 517 (TNGNNNKPYNNNKNTPGSNYE) show a composition bias toward low complexity.

This sequence belongs to the FtsZ family.

The protein resides in the mitochondrion matrix. Functionally, probably involved in mitochondrion division process. When overexpressed, induces mitochondrial tubule formation. Binds to and hydrolyzes GTP. This chain is Mitochondrial division protein fszA (fszA), found in Dictyostelium discoideum (Social amoeba).